Consider the following 943-residue polypeptide: Sodium- and chloride-dependent GABA transporter ine (943 aa).

Residues 1 to 345 are Cytoplasmic-facing; it reads MAENKDVSQV…RQQHWANKMQ (345 aa). The tract at residues 103 to 122 is disordered; the sequence is HKQSPLRHTSVRTRPSSEVL. 3 helical membrane passes run 346–366, 373–393, and 418–438; these read FVLA…FPYM, GVFL…LLFM, and GAGL…SVII. Residues 439-510 lie on the Extracellular side of the membrane; that stretch reads GYSIYYFFTS…GLEYPGMMRW (72 aa). N476 is a glycosylation site (N-linked (GlcNAc...) asparagine). The next 9 helical transmembrane spans lie at 511 to 531, 539 to 559, 591 to 607, 618 to 638, 679 to 699, 723 to 743, 754 to 774, 799 to 819, and 836 to 856; these read ELFA…WKSI, YFTA…AVTL, FNSL…FASY, TVAV…FAFS, WAVM…FAIV, IVVL…IIQG, YAAS…IAWF, CWLV…LINY, and YGIG…YAVI. At 857–943 the chain is on the cytoplasmic side; it reads NFLRSSGDTF…HAEAGGPCGQ (87 aa).

The protein belongs to the sodium:neurotransmitter symporter (SNF) (TC 2.A.22) family. Expressed both maternally and zygotically. Developing embryos exhibit expression in the posterior hindgut, foregut, midgut, Malpighian tubules, anal plate, Garland cells, and a subset of cells in the central nervous system. Central nervous system expression is seen in segmentally repeating in cells flanking the midline of the ventral ganglion. Isoform A and isoform B are colocalized in both the nervous system and the fluid reabsorption system.

Its subcellular location is the membrane. Functionally, plays a role in neuronal membrane excitation, important for normal response properties of the photoreceptor. Able to control excitability from either neurons or glia cells. Ine negatively regulates neuronal sodium channels. Controls neurotransmitter-mediated signaling pathways associated with the structure of the larval peripheral nerve, ine and eag control perineurial glial growth through partially redundant pathways. Isoform A and isoform B are both functional, although isoform A functions with greater efficiency. Has a role in osmolyte transport within the Malpighian tubule and hindgut. This is Sodium- and chloride-dependent GABA transporter ine from Drosophila melanogaster (Fruit fly).